The sequence spans 296 residues: Phosphatidylglycerol--prolipoprotein diacylglyceryl transferase (296 aa).

7 helical membrane-spanning segments follow: residues 17-37 (LAVRWYGLMYLVGFIAAIVVG), 59-79 (MMFYGVLGTVLGGRLGYVLFY), 97-117 (GGMSFHGGFLGVTLAMMLFAW), 129-149 (FVAPMVPLGLAAGRLGNFING), 204-224 (SQLYEIALEGIALFFVLFLFA), 230-250 (MGAISALFLIGYGLARFTVEF), and 257-277 (FLGLLALGLSMGQWLSLPMIL). Residue Arg142 coordinates a 1,2-diacyl-sn-glycero-3-phospho-(1'-sn-glycerol).

Belongs to the Lgt family.

The protein resides in the cell inner membrane. The enzyme catalyses L-cysteinyl-[prolipoprotein] + a 1,2-diacyl-sn-glycero-3-phospho-(1'-sn-glycerol) = an S-1,2-diacyl-sn-glyceryl-L-cysteinyl-[prolipoprotein] + sn-glycerol 1-phosphate + H(+). The protein operates within protein modification; lipoprotein biosynthesis (diacylglyceryl transfer). Functionally, catalyzes the transfer of the diacylglyceryl group from phosphatidylglycerol to the sulfhydryl group of the N-terminal cysteine of a prolipoprotein, the first step in the formation of mature lipoproteins. In Burkholderia cenocepacia (strain HI2424), this protein is Phosphatidylglycerol--prolipoprotein diacylglyceryl transferase.